A 179-amino-acid chain; its full sequence is tRNA (cytidine(56)-2'-O)-methyltransferase (179 aa).

S-adenosyl-L-methionine contacts are provided by residues L82, 112 to 116 (GAEKV), and 130 to 137 (VGNQPHSE).

It belongs to the aTrm56 family. Homodimer.

It localises to the cytoplasm. The enzyme catalyses cytidine(56) in tRNA + S-adenosyl-L-methionine = 2'-O-methylcytidine(56) in tRNA + S-adenosyl-L-homocysteine + H(+). Functionally, specifically catalyzes the AdoMet-dependent 2'-O-ribose methylation of cytidine at position 56 in tRNAs. This Methanococcus maripaludis (strain C5 / ATCC BAA-1333) protein is tRNA (cytidine(56)-2'-O)-methyltransferase.